The primary structure comprises 435 residues: tRNA-2-methylthio-N(6)-dimethylallyladenosine synthase (435 aa).

In terms of domain architecture, MTTase N-terminal spans 5–120 (KKLFIETLGC…ISEVLHKERA (116 aa)). 6 residues coordinate [4Fe-4S] cluster: Cys-14, Cys-51, Cys-83, Cys-152, Cys-156, and Cys-159. One can recognise a Radical SAM core domain in the interval 138 to 372 (RTSPYKAYIN…NLAVNILDEK (235 aa)). Positions 374 to 435 (KTHLGKIYRV…RTILSGEIVG (62 aa)) constitute a TRAM domain.

It belongs to the methylthiotransferase family. MiaB subfamily. Monomer. [4Fe-4S] cluster serves as cofactor.

The protein resides in the cytoplasm. The catalysed reaction is N(6)-dimethylallyladenosine(37) in tRNA + (sulfur carrier)-SH + AH2 + 2 S-adenosyl-L-methionine = 2-methylsulfanyl-N(6)-dimethylallyladenosine(37) in tRNA + (sulfur carrier)-H + 5'-deoxyadenosine + L-methionine + A + S-adenosyl-L-homocysteine + 2 H(+). In terms of biological role, catalyzes the methylthiolation of N6-(dimethylallyl)adenosine (i(6)A), leading to the formation of 2-methylthio-N6-(dimethylallyl)adenosine (ms(2)i(6)A) at position 37 in tRNAs that read codons beginning with uridine. This chain is tRNA-2-methylthio-N(6)-dimethylallyladenosine synthase, found in Sulfurimonas denitrificans (strain ATCC 33889 / DSM 1251) (Thiomicrospira denitrificans (strain ATCC 33889 / DSM 1251)).